A 419-amino-acid polypeptide reads, in one-letter code: UDP-N-acetylglucosamine 1-carboxyvinyltransferase (419 aa).

Residue 22 to 23 (KN) participates in phosphoenolpyruvate binding. Arg-91 is a binding site for UDP-N-acetyl-alpha-D-glucosamine. Cys-115 (proton donor) is an active-site residue. Cys-115 is modified (2-(S-cysteinyl)pyruvic acid O-phosphothioketal). UDP-N-acetyl-alpha-D-glucosamine contacts are provided by residues 120-124 (RPVDL), 160-163 (KVSV), Asp-305, and Val-327.

It belongs to the EPSP synthase family. MurA subfamily.

The protein localises to the cytoplasm. The enzyme catalyses phosphoenolpyruvate + UDP-N-acetyl-alpha-D-glucosamine = UDP-N-acetyl-3-O-(1-carboxyvinyl)-alpha-D-glucosamine + phosphate. The protein operates within cell wall biogenesis; peptidoglycan biosynthesis. Its function is as follows. Cell wall formation. Adds enolpyruvyl to UDP-N-acetylglucosamine. The sequence is that of UDP-N-acetylglucosamine 1-carboxyvinyltransferase from Salmonella arizonae (strain ATCC BAA-731 / CDC346-86 / RSK2980).